A 217-amino-acid chain; its full sequence is ITG-like peptide (217 aa).

The N-terminal stretch at 1–21 is a signal peptide; the sequence is MHRTMAVTAVLVLSAAGAAHA. The propeptide occupies 22 to 208; the sequence is WGGLFNRFSS…REFVQHTAGE (187 aa).

ITG-like peptide: Expressed in corpora cardiaca (CC), corpora allata (CA), antennal lobe (AL) and gnathal ganglion (GNG) (at protein level). Expression in AL detected in all animals, expression in GNG detected in most animals and in CA and CC detected in few animals (at protein level).

The protein localises to the secreted. The sequence is that of ITG-like peptide from Agrotis ipsilon (Black cutworm moth).